Reading from the N-terminus, the 566-residue chain is Arginine--tRNA ligase (566 aa).

The 'HIGH' region signature appears at 123-133 (PNVAKPFHVGH).

Belongs to the class-I aminoacyl-tRNA synthetase family. As to quaternary structure, monomer.

The protein resides in the cytoplasm. It catalyses the reaction tRNA(Arg) + L-arginine + ATP = L-arginyl-tRNA(Arg) + AMP + diphosphate. This chain is Arginine--tRNA ligase, found in Alkaliphilus metalliredigens (strain QYMF).